The chain runs to 138 residues: Enhancer of split malpha protein (138 aa).

This sequence belongs to the M4-like protein family.

Part of the Notch signaling pathway. This Drosophila melanogaster (Fruit fly) protein is Enhancer of split malpha protein.